A 478-amino-acid polypeptide reads, in one-letter code: Putative response regulator NtrX-like (478 aa).

Positions 5–121 (DVLIVDDEED…KLVILLKRAC (117 aa)) constitute a Response regulatory domain. At aspartate 54 the chain carries 4-aspartylphosphate. Residues 143–372 (LVGNSTITLK…LRNVVEWTLI (230 aa)) form the Sigma-54 factor interaction domain. ATP is bound by residues 171–178 (GKVGSGKE) and 235–244 (ANNGTLYIDE).

Functionally, member of the two-component regulatory system RBE_0312/RBE_0470. This chain is Putative response regulator NtrX-like, found in Rickettsia bellii (strain RML369-C).